The primary structure comprises 428 residues: MRGREDANARVLGSQWGDEGKGKLVDILAREYDVVARCQGGANAGHTIYDDDGKKYALHLVPSGILNENATCVVGNGVVVHLPGMFDEIDALLKAGVDARGRMMVSDRAHLLFDLHKEIDGLREAELSGNKIGTTKRGIGPAYASKATRNGVRLGDIRDADKFANALRTLAADAAARFDGFEYDVEAEIVRYREIASRIEPFIADTVEYVNDAHRNGKKILVEGANATMLDLDFGTYPFVTSSNPAIGGVSNGLGLAPRKFETIIGVAKAYTTRVGAGPYPTELFGDVADKLRELGYEYGTTTGRPRRIGWLDMVALNYANQINGFTHLNITKLDVLSEMDELKIGVAYELPNGKTTTAFPADIATLENVKVVYETLPGWKTDIANVRSWDDMPENAKKYILRCEELSGVECRYIGVGPGRDAMVIKP.

GTP is bound by residues Gly17–Lys23 and Gly45–Thr47. Residue Asp18 is the Proton acceptor of the active site. Mg(2+) contacts are provided by Asp18 and Gly45. IMP is bound by residues Asp18 to Lys21, Asn43 to His46, Thr135, Arg149, Asn226, Thr241, and Arg305. His46 (proton donor) is an active-site residue. Thr301–Arg307 contributes to the substrate binding site. Residues Arg307, Lys333 to Asp335, and Gly416 to Gly418 contribute to the GTP site.

It belongs to the adenylosuccinate synthetase family. As to quaternary structure, homodimer. It depends on Mg(2+) as a cofactor.

It is found in the plastid. Its subcellular location is the chloroplast. It catalyses the reaction IMP + L-aspartate + GTP = N(6)-(1,2-dicarboxyethyl)-AMP + GDP + phosphate + 2 H(+). It participates in purine metabolism; AMP biosynthesis via de novo pathway; AMP from IMP: step 1/2. Functionally, plays an important role in the de novo pathway and in the salvage pathway of purine nucleotide biosynthesis. Catalyzes the first committed step in the biosynthesis of AMP from IMP. This Ostreococcus lucimarinus (strain CCE9901) protein is Adenylosuccinate synthetase, chloroplastic.